The following is a 246-amino-acid chain: Bis(5'-nucleosyl)-tetraphosphatase PrpE [asymmetrical] (246 aa).

This sequence belongs to the PrpE family. Ni(2+) is required as a cofactor.

The catalysed reaction is P(1),P(4)-bis(5'-guanosyl) tetraphosphate + H2O = GMP + GTP + 2 H(+). Functionally, asymmetrically hydrolyzes Ap4p to yield AMP and ATP. This Bacillus cereus (strain B4264) protein is Bis(5'-nucleosyl)-tetraphosphatase PrpE [asymmetrical].